A 317-amino-acid polypeptide reads, in one-letter code: Pantothenate kinase (317 aa).

G95–S102 is a binding site for ATP.

Belongs to the prokaryotic pantothenate kinase family.

It localises to the cytoplasm. It carries out the reaction (R)-pantothenate + ATP = (R)-4'-phosphopantothenate + ADP + H(+). The protein operates within cofactor biosynthesis; coenzyme A biosynthesis; CoA from (R)-pantothenate: step 1/5. The protein is Pantothenate kinase of Rhodopseudomonas palustris (strain BisB18).